The chain runs to 281 residues: Type VI secretion system accessory component TagJ (281 aa).

As to quaternary structure, interacts with TssB1 (via N-terminus). Interacts with ClpV1.

Functionally, component of the H1 type VI (H1-T6SS) secretion system that plays a role in the release of toxins targeting both eukaryotic and prokaryotic species. Forms a stable complex with TssB1. This complex, although not crucial for the H1-T6SS function, may fine-tune the assembly of the system. Plays a role in the interaction between ClpV1 and the TssC1/TssB1 sheath. The polypeptide is Type VI secretion system accessory component TagJ (Pseudomonas aeruginosa (strain ATCC 15692 / DSM 22644 / CIP 104116 / JCM 14847 / LMG 12228 / 1C / PRS 101 / PAO1)).